The following is a 915-amino-acid chain: Protein translocase subunit SecA (915 aa).

ATP-binding positions include Gln87, 105 to 109 (GEGKT), and Asp516. Positions 854–915 (QKMQMRHEQL…KYKNCHGQLE (62 aa)) are disordered. Positions 899, 901, 910, and 911 each coordinate Zn(2+).

It belongs to the SecA family. In terms of assembly, monomer and homodimer. Part of the essential Sec protein translocation apparatus which comprises SecA, SecYEG and auxiliary proteins SecDF-YajC and YidC. Requires Zn(2+) as cofactor.

It is found in the cell inner membrane. The protein localises to the cytoplasm. The catalysed reaction is ATP + H2O + cellular proteinSide 1 = ADP + phosphate + cellular proteinSide 2.. Functionally, part of the Sec protein translocase complex. Interacts with the SecYEG preprotein conducting channel. Has a central role in coupling the hydrolysis of ATP to the transfer of proteins into and across the cell membrane, serving both as a receptor for the preprotein-SecB complex and as an ATP-driven molecular motor driving the stepwise translocation of polypeptide chains across the membrane. The sequence is that of Protein translocase subunit SecA from Cellvibrio japonicus (strain Ueda107) (Pseudomonas fluorescens subsp. cellulosa).